Reading from the N-terminus, the 518-residue chain is Cytochrome P450 1A1 (518 aa).

The mitochondrial targeting signal stretch occupies residues 33–44; it reads SKPRVPKGLKRL. O-linked (GlcNAc) serine glycosylation is present at S71. Substrate is bound at residue F228. C461 provides a ligand contact to heme.

This sequence belongs to the cytochrome P450 family. As to quaternary structure, interacts with cytosolic chaperones HSP70 and HSP90; this interaction is required for initial targeting to mitochondria. Interacts (via mitochondrial targeting signal) with TOMM40 (via N-terminus); this interaction is required for translocation across the mitochondrial outer membrane. Heme serves as cofactor.

It is found in the endoplasmic reticulum membrane. The protein resides in the mitochondrion inner membrane. Its subcellular location is the microsome membrane. It localises to the cytoplasm. The enzyme catalyses an organic molecule + reduced [NADPH--hemoprotein reductase] + O2 = an alcohol + oxidized [NADPH--hemoprotein reductase] + H2O + H(+). It carries out the reaction estrone + reduced [NADPH--hemoprotein reductase] + O2 = 2-hydroxyestrone + oxidized [NADPH--hemoprotein reductase] + H2O + H(+). The catalysed reaction is estrone + reduced [NADPH--hemoprotein reductase] + O2 = 4-hydroxyestrone + oxidized [NADPH--hemoprotein reductase] + H2O + H(+). It catalyses the reaction estrone + reduced [NADPH--hemoprotein reductase] + O2 = 6alpha-hydroxyestrone + oxidized [NADPH--hemoprotein reductase] + H2O + H(+). The enzyme catalyses estrone + reduced [NADPH--hemoprotein reductase] + O2 = 15alpha-hydroxyestrone + oxidized [NADPH--hemoprotein reductase] + H2O + H(+). It carries out the reaction estrone + reduced [NADPH--hemoprotein reductase] + O2 = 16alpha-hydroxyestrone + oxidized [NADPH--hemoprotein reductase] + H2O + H(+). The catalysed reaction is 17beta-estradiol + reduced [NADPH--hemoprotein reductase] + O2 = 2-hydroxy-17beta-estradiol + oxidized [NADPH--hemoprotein reductase] + H2O + H(+). It catalyses the reaction 17beta-estradiol + reduced [NADPH--hemoprotein reductase] + O2 = 4-hydroxy-17beta-estradiol + oxidized [NADPH--hemoprotein reductase] + H2O + H(+). The enzyme catalyses 17beta-estradiol + reduced [NADPH--hemoprotein reductase] + O2 = 6alpha-hydroxy-17beta-estradiol + oxidized [NADPH--hemoprotein reductase] + H2O + H(+). It carries out the reaction 17beta-estradiol + reduced [NADPH--hemoprotein reductase] + O2 = 7alpha-hydroxy-17beta-estradiol + oxidized [NADPH--hemoprotein reductase] + H2O + H(+). The catalysed reaction is 17beta-estradiol + reduced [NADPH--hemoprotein reductase] + O2 = 15alpha-hydroxy-17beta-estradiol + oxidized [NADPH--hemoprotein reductase] + H2O + H(+). It catalyses the reaction (5Z,8Z,11Z)-eicosatrienoate + reduced [NADPH--hemoprotein reductase] + O2 = 19-hydroxy-(5Z,8Z,11Z)-eicosatrienoate + oxidized [NADPH--hemoprotein reductase] + H2O + H(+). The enzyme catalyses (5Z,8Z,11Z,14Z)-eicosatetraenoate + reduced [NADPH--hemoprotein reductase] + O2 = 16-hydroxy-(5Z,8Z,11Z,14Z)-eicosatetraenoate + oxidized [NADPH--hemoprotein reductase] + H2O + H(+). It carries out the reaction (5Z,8Z,11Z,14Z)-eicosatetraenoate + reduced [NADPH--hemoprotein reductase] + O2 = 17-hydroxy-(5Z,8Z,11Z,14Z)-eicosatetraenoate + oxidized [NADPH--hemoprotein reductase] + H2O + H(+). The catalysed reaction is (5Z,8Z,11Z,14Z)-eicosatetraenoate + reduced [NADPH--hemoprotein reductase] + O2 = 18-hydroxy-(5Z,8Z,11Z,14Z)-eicosatetraenoate + oxidized [NADPH--hemoprotein reductase] + H2O + H(+). It catalyses the reaction (5Z,8Z,11Z,14Z)-eicosatetraenoate + reduced [NADPH--hemoprotein reductase] + O2 = 19-hydroxy-(5Z,8Z,11Z,14Z)-eicosatetraenoate + oxidized [NADPH--hemoprotein reductase] + H2O + H(+). The enzyme catalyses (5Z,8Z,11Z,14Z,17Z)-eicosapentaenoate + reduced [NADPH--hemoprotein reductase] + O2 = 19-hydroxy-(5Z,8Z,11Z,14Z,17Z)-eicosapentaenoate + oxidized [NADPH--hemoprotein reductase] + H2O + H(+). It carries out the reaction (5Z,8Z,11Z,14Z)-eicosatetraenoate + reduced [NADPH--hemoprotein reductase] + O2 = (8R,9S)-epoxy-(5Z,11Z,14Z)-eicosatrienoate + oxidized [NADPH--hemoprotein reductase] + H2O + H(+). The catalysed reaction is (5Z,8Z,11Z,14Z)-eicosatetraenoate + reduced [NADPH--hemoprotein reductase] + O2 = (11R,12S)-epoxy-(5Z,8Z,14Z)-eicosatrienoate + oxidized [NADPH--hemoprotein reductase] + H2O + H(+). It catalyses the reaction (5Z,8Z,11Z,14Z)-eicosatetraenoate + reduced [NADPH--hemoprotein reductase] + O2 = (14S,15R)-epoxy-(5Z,8Z,11Z)-eicosatrienoate + oxidized [NADPH--hemoprotein reductase] + H2O + H(+). The enzyme catalyses (5Z,8Z,11Z,14Z)-eicosatetraenoate + reduced [NADPH--hemoprotein reductase] + O2 = (14R,15S)-epoxy-(5Z,8Z,11Z)-eicosatrienoate + oxidized [NADPH--hemoprotein reductase] + H2O + H(+). It carries out the reaction (5Z,8Z,11Z,14Z,17Z)-eicosapentaenoate + reduced [NADPH--hemoprotein reductase] + O2 = (17R,18S)-epoxy-(5Z,8Z,11Z,14Z)-eicosatetraenoate + oxidized [NADPH--hemoprotein reductase] + H2O + H(+). The catalysed reaction is (4Z,7Z,10Z,13Z,16Z,19Z)-docosahexaenoate + reduced [NADPH--hemoprotein reductase] + O2 = (19S,20R)-epoxy-(4Z,7Z,10Z,13Z,16Z)-docosapentaenoate + oxidized [NADPH--hemoprotein reductase] + H2O + H(+). It catalyses the reaction (4Z,7Z,10Z,13Z,16Z,19Z)-docosahexaenoate + reduced [NADPH--hemoprotein reductase] + O2 = (19R,20S)-epoxy-(4Z,7Z,10Z,13Z,16Z)-docosapentaenoate + oxidized [NADPH--hemoprotein reductase] + H2O + H(+). The enzyme catalyses all-trans-retinol + reduced [NADPH--hemoprotein reductase] + O2 = all-trans-retinal + oxidized [NADPH--hemoprotein reductase] + 2 H2O + H(+). It carries out the reaction all-trans-retinal + reduced [NADPH--hemoprotein reductase] + O2 = all-trans-retinoate + oxidized [NADPH--hemoprotein reductase] + H2O + 2 H(+). The catalysed reaction is (13S)-hydroperoxy-(9Z,11E)-octadecadienoate = 13-oxo-(9Z,11E)-octadecadienoate + H2O. It catalyses the reaction (12S)-hydroperoxy-(5Z,8Z,10E,14Z)-eicosatetraenoate = 12-oxo-(5Z,8Z,10E,14Z)-eicosatetraenoate + H2O. The enzyme catalyses (15S)-hydroperoxy-(5Z,8Z,11Z,13E)-eicosatetraenoate = 15-oxo-(5Z,8Z,11Z,13E)-eicosatetraenoate + H2O. It carries out the reaction (5S)-hydroperoxy-(6E,8Z,11Z,14Z)-eicosatetraenoate = 5-oxo-(6E,8Z,11Z,14Z)-eicosatetraenoate + H2O. Its pathway is steroid hormone biosynthesis. The protein operates within lipid metabolism; fatty acid metabolism. It functions in the pathway cofactor metabolism; retinol metabolism. Its function is as follows. A cytochrome P450 monooxygenase involved in the metabolism of various endogenous substrates, including fatty acids, steroid hormones and vitamins. Mechanistically, uses molecular oxygen inserting one oxygen atom into a substrate, and reducing the second into a water molecule, with two electrons provided by NADPH via cytochrome P450 reductase (CPR; NADPH-ferrihemoprotein reductase). Catalyzes the hydroxylation of carbon-hydrogen bonds. Exhibits high catalytic activity for the formation of hydroxyestrogens from estrone (E1) and 17beta-estradiol (E2), namely 2-hydroxy E1 and E2, as well as D-ring hydroxylated E1 and E2 at the C15alpha and C16alpha positions. Displays different regioselectivities for polyunsaturated fatty acids (PUFA) hydroxylation. Catalyzes the epoxidation of double bonds of certain PUFA. Converts arachidonic acid toward epoxyeicosatrienoic acid (EET) regioisomers, 8,9-, 11,12-, and 14,15-EET, that function as lipid mediators in the vascular system. Displays an absolute stereoselectivity in the epoxidation of eicosapentaenoic acid (EPA) producing the 17(R),18(S) enantiomer. May play an important role in all-trans retinoic acid biosynthesis in extrahepatic tissues. Catalyzes two successive oxidative transformation of all-trans retinol to all-trans retinal and then to the active form all-trans retinoic acid. May also participate in eicosanoids metabolism by converting hydroperoxide species into oxo metabolites (lipoxygenase-like reaction, NADPH-independent). The polypeptide is Cytochrome P450 1A1 (CYP1A1) (Oryctolagus cuniculus (Rabbit)).